The primary structure comprises 87 residues: MERTNNRKVLTGRVVSDKMDKTIVVTVETKVKHKLYGKRVNYSKKYKTHDENNTAKIGDVVRIQETRPLSKDKRFRLVEVVEKAVII.

This sequence belongs to the universal ribosomal protein uS17 family. In terms of assembly, part of the 30S ribosomal subunit.

One of the primary rRNA binding proteins, it binds specifically to the 5'-end of 16S ribosomal RNA. This is Small ribosomal subunit protein uS17 from Exiguobacterium sibiricum (strain DSM 17290 / CCUG 55495 / CIP 109462 / JCM 13490 / 255-15).